The following is a 465-amino-acid chain: ATP synthase subunit beta (465 aa).

Residue 148-155 (GGAGVGKT) coordinates ATP.

This sequence belongs to the ATPase alpha/beta chains family. As to quaternary structure, F-type ATPases have 2 components, CF(1) - the catalytic core - and CF(0) - the membrane proton channel. CF(1) has five subunits: alpha(3), beta(3), gamma(1), delta(1), epsilon(1). CF(0) has three main subunits: a(1), b(2) and c(9-12). The alpha and beta chains form an alternating ring which encloses part of the gamma chain. CF(1) is attached to CF(0) by a central stalk formed by the gamma and epsilon chains, while a peripheral stalk is formed by the delta and b chains.

Its subcellular location is the cell inner membrane. The catalysed reaction is ATP + H2O + 4 H(+)(in) = ADP + phosphate + 5 H(+)(out). Produces ATP from ADP in the presence of a proton gradient across the membrane. The catalytic sites are hosted primarily by the beta subunits. This is ATP synthase subunit beta from Neisseria gonorrhoeae (strain ATCC 700825 / FA 1090).